The chain runs to 301 residues: tRNA pseudouridine synthase B (301 aa).

D47 acts as the Nucleophile in catalysis.

It belongs to the pseudouridine synthase TruB family. Type 1 subfamily.

The catalysed reaction is uridine(55) in tRNA = pseudouridine(55) in tRNA. Responsible for synthesis of pseudouridine from uracil-55 in the psi GC loop of transfer RNAs. The chain is tRNA pseudouridine synthase B from Cereibacter sphaeroides (strain ATCC 17025 / ATH 2.4.3) (Rhodobacter sphaeroides).